The following is a 225-amino-acid chain: NAD(P)H-quinone oxidoreductase subunit K, chloroplastic (225 aa).

The [4Fe-4S] cluster site is built by Cys43, Cys44, Cys108, and Cys139.

It belongs to the complex I 20 kDa subunit family. As to quaternary structure, NDH is composed of at least 16 different subunits, 5 of which are encoded in the nucleus. The cofactor is [4Fe-4S] cluster.

Its subcellular location is the plastid. It localises to the chloroplast thylakoid membrane. It carries out the reaction a plastoquinone + NADH + (n+1) H(+)(in) = a plastoquinol + NAD(+) + n H(+)(out). It catalyses the reaction a plastoquinone + NADPH + (n+1) H(+)(in) = a plastoquinol + NADP(+) + n H(+)(out). Functionally, NDH shuttles electrons from NAD(P)H:plastoquinone, via FMN and iron-sulfur (Fe-S) centers, to quinones in the photosynthetic chain and possibly in a chloroplast respiratory chain. The immediate electron acceptor for the enzyme in this species is believed to be plastoquinone. Couples the redox reaction to proton translocation, and thus conserves the redox energy in a proton gradient. The chain is NAD(P)H-quinone oxidoreductase subunit K, chloroplastic from Oryza nivara (Indian wild rice).